Consider the following 242-residue polypeptide: UPF0157 protein PA4798 (242 aa).

Residues 215-242 (AGAESTPGGPADTAYFESLRSRVSKPQD) are disordered.

The protein belongs to the UPF0157 (GrpB) family.

In Pseudomonas aeruginosa (strain ATCC 15692 / DSM 22644 / CIP 104116 / JCM 14847 / LMG 12228 / 1C / PRS 101 / PAO1), this protein is UPF0157 protein PA4798.